The following is a 160-amino-acid chain: NADH-quinone oxidoreductase subunit B (160 aa).

Positions 37, 38, 102, and 132 each coordinate [4Fe-4S] cluster.

It belongs to the complex I 20 kDa subunit family. NDH-1 is composed of 14 different subunits. Subunits NuoB, C, D, E, F, and G constitute the peripheral sector of the complex. The cofactor is [4Fe-4S] cluster.

The protein localises to the cell inner membrane. The enzyme catalyses a quinone + NADH + 5 H(+)(in) = a quinol + NAD(+) + 4 H(+)(out). NDH-1 shuttles electrons from NADH, via FMN and iron-sulfur (Fe-S) centers, to quinones in the respiratory chain. Couples the redox reaction to proton translocation (for every two electrons transferred, four hydrogen ions are translocated across the cytoplasmic membrane), and thus conserves the redox energy in a proton gradient. The sequence is that of NADH-quinone oxidoreductase subunit B from Cupriavidus metallidurans (strain ATCC 43123 / DSM 2839 / NBRC 102507 / CH34) (Ralstonia metallidurans).